A 129-amino-acid chain; its full sequence is Aspartate 1-decarboxylase (129 aa).

Serine 25 acts as the Schiff-base intermediate with substrate; via pyruvic acid in catalysis. Serine 25 carries the post-translational modification Pyruvic acid (Ser). Threonine 57 serves as a coordination point for substrate. Catalysis depends on tyrosine 58, which acts as the Proton donor. 73–75 provides a ligand contact to substrate; it reads GAA.

Belongs to the PanD family. As to quaternary structure, heterooctamer of four alpha and four beta subunits. Pyruvate is required as a cofactor. Post-translationally, is synthesized initially as an inactive proenzyme, which is activated by self-cleavage at a specific serine bond to produce a beta-subunit with a hydroxyl group at its C-terminus and an alpha-subunit with a pyruvoyl group at its N-terminus.

The protein resides in the cytoplasm. It catalyses the reaction L-aspartate + H(+) = beta-alanine + CO2. Its pathway is cofactor biosynthesis; (R)-pantothenate biosynthesis; beta-alanine from L-aspartate: step 1/1. Functionally, catalyzes the pyruvoyl-dependent decarboxylation of aspartate to produce beta-alanine. The protein is Aspartate 1-decarboxylase of Chlorobium chlorochromatii (strain CaD3).